The chain runs to 220 residues: Small ribosomal subunit protein uS3 (220 aa).

The KH type-2 domain maps to 43–111; sequence IRSYLTKTLD…QVQLNILEVK (69 aa).

Belongs to the universal ribosomal protein uS3 family. In terms of assembly, part of the 30S ribosomal subunit. Forms a tight complex with proteins S10 and S14.

Binds the lower part of the 30S subunit head. Binds mRNA in the 70S ribosome, positioning it for translation. The protein is Small ribosomal subunit protein uS3 of Tropheryma whipplei (strain TW08/27) (Whipple's bacillus).